The following is a 651-amino-acid chain: Mediator of RNA polymerase II transcription subunit 17 (651 aa).

Positions Gln-51–Glu-83 are disordered.

It belongs to the Mediator complex subunit 17 family. In terms of assembly, interacts with GATA1 and PPARG. Component of the Mediator complex, which is composed of MED1, MED4, MED6, MED7, MED8, MED9, MED10, MED11, MED12, MED13, MED13L, MED14, MED15, MED16, MED17, MED18, MED19, MED20, MED21, MED22, MED23, MED24, MED25, MED26, MED27, MED29, MED30, MED31, CCNC, CDK8 and CDC2L6/CDK11. The MED12, MED13, CCNC and CDK8 subunits form a distinct module termed the CDK8 module. Mediator containing the CDK8 module is less active than Mediator lacking this module in supporting transcriptional activation. Individual preparations of the Mediator complex lacking one or more distinct subunits have been variously termed ARC, CRSP, DRIP, PC2, SMCC and TRAP. Interacts with STAT2. Ubiquitous.

It localises to the nucleus. Its function is as follows. Component of the Mediator complex, a coactivator involved in the regulated transcription of nearly all RNA polymerase II-dependent genes. Mediator functions as a bridge to convey information from gene-specific regulatory proteins to the basal RNA polymerase II transcription machinery. Mediator is recruited to promoters by direct interactions with regulatory proteins and serves as a scaffold for the assembly of a functional preinitiation complex with RNA polymerase II and the general transcription factors. The polypeptide is Mediator of RNA polymerase II transcription subunit 17 (MED17) (Homo sapiens (Human)).